Reading from the N-terminus, the 179-residue chain is Large ribosomal subunit protein uL5 (179 aa).

It belongs to the universal ribosomal protein uL5 family. Part of the 50S ribosomal subunit; part of the 5S rRNA/L5/L18/L25 subcomplex. Contacts the 5S rRNA and the P site tRNA. Forms a bridge to the 30S subunit in the 70S ribosome.

Functionally, this is one of the proteins that bind and probably mediate the attachment of the 5S RNA into the large ribosomal subunit, where it forms part of the central protuberance. In the 70S ribosome it contacts protein S13 of the 30S subunit (bridge B1b), connecting the 2 subunits; this bridge is implicated in subunit movement. Contacts the P site tRNA; the 5S rRNA and some of its associated proteins might help stabilize positioning of ribosome-bound tRNAs. The polypeptide is Large ribosomal subunit protein uL5 (Pectobacterium carotovorum subsp. carotovorum (strain PC1)).